The sequence spans 128 residues: Large ribosomal subunit protein bL20 (128 aa).

Belongs to the bacterial ribosomal protein bL20 family.

In terms of biological role, binds directly to 23S ribosomal RNA and is necessary for the in vitro assembly process of the 50S ribosomal subunit. It is not involved in the protein synthesizing functions of that subunit. The polypeptide is Large ribosomal subunit protein bL20 (Anaplasma marginale (strain Florida)).